A 519-amino-acid chain; its full sequence is Circadian clock oscillator protein KaiC 1 (519 aa).

KaiC domains follow at residues 1–248 and 262–519; these read MNLP…INIF and ARIS…KTAE. ATP-binding residues include G50, T51, G52, K53, T54, L55, S90, K225, L226, R227, T229, H231, T241, T291, G292, T293, G294, K295, T296, and L297. T54 contacts Mg(2+). T296 is a binding site for Mg(2+). E319 serves as a coordination point for Mg(2+). W332 is a binding site for ATP. S432 carries the post-translational modification Phosphoserine; by autocatalysis. A Phosphothreonine; by autocatalysis modification is found at T433. ATP-binding residues include R452, K458, M459, R460, S462, H464, and K466.

It belongs to the KaiC family. As to quaternary structure, homohexamer; hexamerization is dependent on ATP-binding. Core component of the KaiABC complex, at least composed of a KaiC homohexamer, a KaiB dimer and two KaiA dimers. Interacts directly with SasA. Multimerizes, probably forming homohexamers, no interaction with KaiC2 or KaiC3 is seen. Interacts with KaiA. In another study interacts with itself, KaiB1, KaiB3 and KaiC3. Interacts with SasA (hik8). The cofactor is Mg(2+). Post-translationally, phosphorylated on serine and threonine residues by autocatalysis. Has a 4 step phosphorylation cycle; the autokinase acts first on Thr-433, then Ser-432. When Ser-432 is modified KaiC switches to an autophosphatase mode, acting first on phospho-Thr-433 then phospho-Ser-432.

It carries out the reaction L-seryl-[protein] + ATP = O-phospho-L-seryl-[protein] + ADP + H(+). The enzyme catalyses L-threonyl-[protein] + ATP = O-phospho-L-threonyl-[protein] + ADP + H(+). The catalysed reaction is ATP + H2O = ADP + phosphate + H(+). With respect to regulation, the interaction with KaiA enhances its phosphorylation status, while the interaction with KaiB decreases it. Functionally, component of the oscillator and circadian clock in this organism, enhances fitness in a rhythmic environment. Autophosphorylates in the presence of KaiA, no activity is seen in its absence. Its function is as follows. Central component of the KaiABC oscillator complex, which constitutes the main circadian regulator in cyanobacteria. Complex composition changes during the circadian cycle to control KaiC phosphorylation. KaiA stimulates KaiC autophosphorylation, while KaiB sequesters KaiA, leading to KaiC autodephosphorylation. Clock output pathways impact the RpaA transcriptional regulator. KaiC enhances the autophosphorylation activity of SasA, which then transfers its phosphate group to RpaA to activate it. KaiB and KaiC together enhance the phospho-RpaA dephosphatase activity of CikA. Has a weak, temperature-independent ATPase activity; ATPase activity defines the circadian period. The phosphorylation state of KaiC modulates its ATPase activity and effects KaiB binding. This is Circadian clock oscillator protein KaiC 1 from Synechocystis sp. (strain ATCC 27184 / PCC 6803 / Kazusa).